The sequence spans 532 residues: NMDA receptor synaptonuclear signaling and neuronal migration factor (532 aa).

Gly2 carries N-myristoyl glycine lipidation. The tract at residues 2–235 is necessary and sufficient to elicit dendritic processes and synaptic contacts; it reads GAAASRRRAL…FSFQTATTTM (234 aa). 2 disordered regions span residues 34–67 and 127–174; these read SQSH…APHN and RRQR…GCAK. The span at 38-48 shows a compositional bias: basic and acidic residues; the sequence is PENRNGADHLL. Basic residues predominate over residues 127 to 139; sequence RRQRERHPHHHSQ. Residues 155–164 are compositionally biased toward polar residues; sequence PCQSWAGSRQ. Ser206 is subject to Phosphoserine. The Nuclear localization signal signature appears at 247-252; sequence RKRRKR. Residues 275-315 form a disordered region; that stretch reads RVKAQTFAERRERSFSRSWSDPTPMKADTSHDSRDSSDLQS. A phosphoserine mark is found at Ser292 and Ser294. Positions 302 to 311 are enriched in basic and acidic residues; sequence DTSHDSRDSS.

It belongs to the NSMF family. Interacts with KPNA1; the interaction occurs in a calcium-independent manner after synaptic NMDA receptor stimulation and is required for nuclear import of NSMF but is competed by CABP1. Interacts (via the central NLS-containing motif region) with CABP1 (via EF-hands 1 and 2); the interaction occurs in a calcium-dependent manner after synaptic NMDA receptor stimulation and prevents the nuclear import of NSMF. Cannot be competed by calmodulin. In terms of processing, proteolytically processed after NMDA receptor activation. Cleaved in a calcium-dependent and calpain-sensitive manner. Calpain cleavage is essential for the translocation process from dendrites to the nucleus. Expressed in the radiatum and pyramidale strata of the hippocampus (at protein level). Strongly expressed in the brain. Expressed in the sensory and motor cortex, hippocampus, olfactory bulb, thalamus and amygdala. In the olfactory bulb expressed in the granular cell layer, mitral cell layer and the glomerular layer. In the hippocampus highly expressed in the regions associated with neuronal cell types as CA1, CA2, CA3 and granule cells of the dentate gyrus. All isoforms have been detected in the molecular layers of the hippocampus.

The protein resides in the nucleus. It is found in the nucleus envelope. The protein localises to the nucleus membrane. It localises to the nucleus matrix. Its subcellular location is the cytoplasm. The protein resides in the cell cortex. It is found in the cytoskeleton. The protein localises to the cell membrane. It localises to the cell projection. Its subcellular location is the dendrite. The protein resides in the synapse. It is found in the synaptosome. The protein localises to the postsynaptic density. It localises to the membrane. Functionally, couples NMDA-sensitive glutamate receptor signaling to the nucleus and triggers long-lasting changes in the cytoarchitecture of dendrites and spine synapse processes. Part of the cAMP response element-binding protein (CREB) shut-off signaling pathway. Stimulates outgrowth of olfactory axons and migration of gonadotropin-releasing hormone (GnRH) and luteinizing-hormone-releasing hormone (LHRH) neuronal cells. The chain is NMDA receptor synaptonuclear signaling and neuronal migration factor (Nsmf) from Rattus norvegicus (Rat).